The primary structure comprises 204 residues: MSIFEYNGSAVVAMVGKNCFAIASDRRLGVQLQTVATDFQRVFKIHDKLYIGLSGLATDAQTLYQRLVFRHKLYQLREERDMKPQTFASLVSALLYEKRFGPYFCQPVIAGLGEDNEPFICTMDCIGAKELAKDFVVSGTASESLYGACESMYKPNMEPEELFETISQALQSSVDRDCLSGWGGFVLLVTPTEVKECVIKGRMD.

The protein belongs to the peptidase T1B family. The 26S proteasome consists of a 20S proteasome core and two 19S regulatory subunits. The 20S proteasome core is composed of 28 subunits that are arranged in four stacked rings, resulting in a barrel-shaped structure. The two end rings are each formed by seven alpha subunits, and the two central rings are each formed by seven beta subunits. The catalytic chamber with the active sites is on the inside of the barrel.

It is found in the cytoplasm. Its subcellular location is the nucleus. In terms of biological role, non-catalytic component of the proteasome, a multicatalytic proteinase complex which is characterized by its ability to cleave peptides with Arg, Phe, Tyr, Leu, and Glu adjacent to the leaving group at neutral or slightly basic pH. The proteasome has an ATP-dependent proteolytic activity. This is Proteasome subunit beta type-3 (PBC1) from Oryza sativa subsp. japonica (Rice).